The sequence spans 742 residues: Enhancer of polycomb-like protein 1 (742 aa).

Residues 1–27 (MPTPSAQLDQGIISSNGGTSGVSASST) show a composition bias toward polar residues. 3 disordered regions span residues 1-28 (MPTP…SSTR), 416-446 (RQQS…QCQQ), and 718-742 (KKLV…HQQA). A compositionally biased stretch (low complexity) spans 724–734 (QRQQQQQQQEQ).

It belongs to the enhancer of polycomb family. Component of the NuA4 histone acetyltransferase complex.

It is found in the nucleus. In terms of biological role, component of the NuA4 histone acetyltransferase complex which is involved in transcriptional activation of selected genes principally by acetylation of nucleosomal histone H4 and H2A. The NuA4 complex is also involved in DNA repair. Involved in gene silencing by neighboring heterochromatin, blockage of the silencing spreading along the chromosome, and required for cell cycle progression through G2/M. In Eremothecium gossypii (strain ATCC 10895 / CBS 109.51 / FGSC 9923 / NRRL Y-1056) (Yeast), this protein is Enhancer of polycomb-like protein 1 (EPL1).